A 680-amino-acid polypeptide reads, in one-letter code: Serine/threonine-protein kinase YPK1 (680 aa).

The span at 1 to 11 shows a compositional bias: basic residues; that stretch reads MYSWKSKFKFG. The tract at residues 1–117 is disordered; it reads MYSWKSKFKF…GTPNDATSSS (117 aa). Basic and acidic residues-rich tracts occupy residues 12 to 21 and 41 to 56; these read KSKEEKEAKH and GEHDASITRSSLDRKG. A Phosphothreonine modification is found at Thr-57. Low complexity predominate over residues 59-71; sequence NPSNSSVVPVRVS. Phosphoserine occurs at positions 61, 64, and 71. Over residues 73 to 83 the composition is skewed to polar residues; sequence DASSSTSTVRD. The span at 84-97 shows a compositional bias: low complexity; that stretch reads SNGGNSENTNSSQN. Polar residues predominate over residues 98–117; sequence LDETANIGSTGTPNDATSSS. Position 170 is a phosphoserine (Ser-170). One can recognise a Protein kinase domain in the interval 347-602; sequence FDLLKVIGKG…ADEIRNHPFF (256 aa). ATP is bound by residues 353–361 and Lys-376; that span reads IGKGSFGKV. Asp-470 acts as the Proton acceptor in catalysis. Position 502 is a phosphothreonine (Thr-502). Phosphothreonine; by PKH1 is present on Thr-504. Residues 603-673 enclose the AGC-kinase C-terminal domain; the sequence is SQLSWKRLLM…VGNEQLGSSM (71 aa). Ser-644 and Ser-653 each carry phosphoserine. A Phosphothreonine; by PKH1 modification is found at Thr-662. A Phosphoserine modification is found at Ser-671.

It belongs to the protein kinase superfamily. AGC Ser/Thr protein kinase family. RAC subfamily. Post-translationally, autophosphorylated. Phytosphingosine level stimulates phosphorylation by PKH1. The N-terminal half is phosphorylated by FPK1. Phosphorylation is inhibited by exogenous addition of phytosphingosine.

Its subcellular location is the cytoplasm. It is found in the cell membrane. It carries out the reaction L-seryl-[protein] + ATP = O-phospho-L-seryl-[protein] + ADP + H(+). The catalysed reaction is L-threonyl-[protein] + ATP = O-phospho-L-threonyl-[protein] + ADP + H(+). With respect to regulation, activated by phytosphingosine (PHS), a sphingoid long chain base. Activated by PKH1 phosphorylation. In terms of biological role, plays an essential role in the proliferation of yeast cells. Involved in a signaling pathway, required for optimal cell wall integrity, that acts in parallel with the PKC1-SLT2-dependent pathway. Downstream kinase in the sphingolipid-mediated signaling pathway. Phosphorylation is regulated by the intracellular sphingolipid concentration. Disruption or inhibition of sphingolipid synthesis leads to the activation and phosphorylation of YPK1 through the TORC2 and PKH1 pathways, which in turn phosphorylates ORM1 and LAG1 to activate sphingolipid synthesis. Cooperates with SLI1 in mediating resistance to the sphingolipid biosynthesis inhibitor drug myriocin (ISP-1); kinase activity is essential for the resistance. Required for both receptor-mediated and fluid-phase endocytosis, but is not necessary for receptor phosphorylation or ubiquitination. Necessary for the internalization of plasma membrane proteins carrying different types of internalization signals. Acts downstream of the PKH kinases to control endocytosis by phosphorylating components of the endocytic machinery. Phosphorylation of residue Thr-504 in the activation loop and residue Thr-662 are essential for activity. Phosphorylates and down-regulates flippase activator FPK1. The sequence is that of Serine/threonine-protein kinase YPK1 (YPK1) from Saccharomyces cerevisiae (strain ATCC 204508 / S288c) (Baker's yeast).